Consider the following 258-residue polypeptide: DNA repair protein RecO (258 aa).

It belongs to the RecO family.

Involved in DNA repair and RecF pathway recombination. This chain is DNA repair protein RecO, found in Lactiplantibacillus plantarum (strain ATCC BAA-793 / NCIMB 8826 / WCFS1) (Lactobacillus plantarum).